The primary structure comprises 1091 residues: Integrin alpha-6 (1091 aa).

Positions 1-23 are cleaved as a signal peptide; sequence MAVAGQLCLLYLSAGLLARLGTA. The Extracellular portion of the chain corresponds to 24–1011; it reads FNLDTREDNV…FPSKTVAQYS (988 aa). FG-GAP repeat units lie at residues 30 to 95, 101 to 166, 176 to 229, 244 to 300, 301 to 363, 364 to 419, and 420 to 479; these read EDNV…GPCT, NDAD…IEDD, DGRL…FFDM, DHDE…KSAH, LLPE…KWSN, VKPI…GIIT, and KPTQ…VTPN. An N-linked (GlcNAc...) asparagine glycan is attached at Asn78. Disulfide bonds link Cys86/Cys94, Cys131/Cys154, and Cys175/Cys188. N-linked (GlcNAc...) asparagine glycosylation is found at Asn223 and Asn284. Asp324, Asn326, Asp328, and Asp332 together coordinate Ca(2+). The N-linked (GlcNAc...) asparagine glycan is linked to Asn370. Residues Asp386, Asn388, Asp390, Tyr392, Asp394, Asp441, Asp443, Asn445, Tyr447, and Asp449 each coordinate Ca(2+). Intrachain disulfides connect Cys489-Cys496, Cys502-Cys562, Cys626-Cys632, and Cys726-Cys737. Asn731, Asn746, and Asn927 each carry an N-linked (GlcNAc...) asparagine glycan. Intrachain disulfides connect Cys881-Cys928 and Cys934-Cys939. Asn958 is a glycosylation site (N-linked (GlcNAc...) asparagine). The helical transmembrane segment at 1012–1037 threads the bilayer; that stretch reads GVAWWIILLAVLAGILMLALLVFLLW. Residues 1038–1091 are Cytoplasmic-facing; sequence KCGFFKRSRYDDSIPRYHAVRIRKEEREIKDEKHMDNLEKKQWITKWNENESYS. Cys1039 carries S-palmitoyl cysteine; by DHHC3 lipidation. The short motif at 1040-1044 is the GFFKR motif element; it reads GFFKR. Position 1064 is a phosphoserine (Arg1064).

It belongs to the integrin alpha chain family. In terms of assembly, heterodimer of an alpha and a beta subunit. The alpha subunit is composed of a heavy and a light chain linked by a disulfide bond. Alpha-6 associates with either beta-1 (ITGB1) or beta-4 (ITGB4) to form ITGA6:ITGB1 and ITGA6:ITGB4, respectively. ITGA6:ITGB1 is found in a complex with CD9; interaction takes place in oocytes and is involved in sperm-egg fusion. ITGA6:ITGB4 is found in a ternary complex with NRG1 and ERBB3. ITGA6:ITGB4 is found in a ternary complex with IGF1 and IGF1R. ITGA6:ITGB4 interacts with IGF2. Interacts with ADAM9. Interacts with RAB21. Interacts with MDK. ITGA6:ITGB1 interacts with MDK; this interaction mediates MDK-induced neurite outgrowth. Interacts with CD82; this interaction down-regulates ITGA6-mediated cell adhesion. Isoforms containing segment A, but not segment B, are the major targets for PMA-induced phosphorylation. Phosphorylation occurs on 'Ser-1064' of isoform alpha-6X1A. Phosphorylation is not required for the induction of integrin alpha-6A/beta-1 high affinity but may reduce the affinity for ligand. In terms of processing, undergoes PLAU-mediated cleavage at residues Arg-595-596-Arg in a time-dependent manner to produce processed integrin alpha-6 (alpha6p). Post-translationally, palmitoylation by DHHC3 enhances stability and cell surface expression. In terms of tissue distribution, expressed at low levels in normal skin tissue with elevated levels in skin tumors.

The protein resides in the cell membrane. In terms of biological role, integrin alpha-6/beta-1 (ITGA6:ITGB1) is a receptor for laminin on platelets. Integrin alpha-6/beta-1 (ITGA6:ITGB1) is present in oocytes and is involved in sperm-egg fusion. Integrin alpha-6/beta-4 (ITGA6:ITGB4) is a receptor for laminin in epithelial cells and it plays a critical structural role in the hemidesmosome. ITGA6:ITGB4 binds to NRG1 (via EGF domain) and this binding is essential for NRG1-ERBB signaling. ITGA6:ITGB4 binds to IGF1 and this binding is essential for IGF1 signaling. ITGA6:ITGB4 binds to IGF2 and this binding is essential for IGF2 signaling. This chain is Integrin alpha-6 (Itga6), found in Mus musculus (Mouse).